A 105-amino-acid polypeptide reads, in one-letter code: Small ribosomal subunit protein uS10 (105 aa).

It belongs to the universal ribosomal protein uS10 family. As to quaternary structure, part of the 30S ribosomal subunit.

Its function is as follows. Involved in the binding of tRNA to the ribosomes. The sequence is that of Small ribosomal subunit protein uS10 from Rickettsia bellii (strain OSU 85-389).